The following is a 184-amino-acid chain: Oligoribonuclease (184 aa).

One can recognise an Exonuclease domain in the interval 10–172 (LVWVDCEMTG…ADVLESIAEL (163 aa)). Residue tyrosine 129 is part of the active site.

This sequence belongs to the oligoribonuclease family.

Its subcellular location is the cytoplasm. 3'-to-5' exoribonuclease specific for small oligoribonucleotides. The chain is Oligoribonuclease from Tropheryma whipplei (strain Twist) (Whipple's bacillus).